We begin with the raw amino-acid sequence, 450 residues long: Cysteine proteinase (450 aa).

A signal peptide spans 1 to 20; that stretch reads MPRTEMVRFVRLPVVLLAMA. Positions 21 to 125 are cleaved as a propeptide — activation peptide; sequence ACLASVALGS…RKTVNVTTGR (105 aa). N-linked (GlcNAc...) asparagine glycosylation is present at asparagine 120. Cysteine 147 and cysteine 188 are oxidised to a cystine. Residues cysteine 150, histidine 287, and asparagine 307 contribute to the active site. The segment at 343–450 is 108-residue extension; that stretch reads TPPPPPPPPP…TKAARLVPHQ (108 aa). An N-linked (GlcNAc...) asparagine glycan is attached at asparagine 397.

The protein belongs to the peptidase C1 family.

The protein localises to the lysosome. Functionally, the cysteine proteinases have a potential role in host-parasite interaction and virulence. This Trypanosoma brucei brucei protein is Cysteine proteinase.